We begin with the raw amino-acid sequence, 54 residues long: Large ribosomal subunit protein bL33 (54 aa).

This sequence belongs to the bacterial ribosomal protein bL33 family.

This Buchnera aphidicola subsp. Cinara cedri (strain Cc) protein is Large ribosomal subunit protein bL33.